The following is a 416-amino-acid chain: Creatine kinase U-type, mitochondrial (416 aa).

The transit peptide at 1 to 39 (MAGPFSRLLSARPGLRLLALAGAGSLAAGFLLRSEPVRA) directs the protein to the mitochondrion. A cardiolipin-binding region spans residues 40-64 (ASERRRLYPPSAEYPDLRKHNNCMA). The 87-residue stretch at 45-131 (RLYPPSAEYP…FDPVIQERHN (87 aa)) folds into the Phosphagen kinase N-terminal domain. Serine 151 is modified (phosphoserine). Positions 158–400 (YVLSSRVRTG…NFLIDCERRL (243 aa)) constitute a Phosphagen kinase C-terminal domain. Position 161-165 (161-165 (SSRVR)) interacts with ATP. Serine 196 bears the Phosphoserine mark. The residue at position 213 (threonine 213) is a Phosphothreonine. Residue histidine 224 coordinates ATP. Serine 232 carries the phosphoserine modification. ATP contacts are provided by residues arginine 269, arginine 325, and 353 to 358 (RGTGGV). Phosphothreonine is present on threonine 355. Position 365 is a phosphoserine (serine 365). Aspartate 368 lines the ATP pocket.

This sequence belongs to the ATP:guanido phosphotransferase family. In terms of assembly, exists as an octamer composed of four MTCK homodimers.

Its subcellular location is the mitochondrion inner membrane. It catalyses the reaction creatine + ATP = N-phosphocreatine + ADP + H(+). Reversibly catalyzes the transfer of phosphate between ATP and various phosphogens (e.g. creatine phosphate). Creatine kinase isoenzymes play a central role in energy transduction in tissues with large, fluctuating energy demands, such as skeletal muscle, heart, brain and spermatozoa. This chain is Creatine kinase U-type, mitochondrial (CKMT1), found in Bos taurus (Bovine).